Reading from the N-terminus, the 323-residue chain is Viral cathepsin (323 aa).

An N-terminal signal peptide occupies residues 1–16 (MNKILFYLFVYGVVNS). Residues 17 to 112 (AAYDLLKAPN…IVLDQPPGKG (96 aa)) constitute a propeptide, activation peptide. 3 disulfides stabilise this stretch: Cys133-Cys174, Cys167-Cys207, and Cys262-Cys310. The active site involves Cys136. A glycan (N-linked (GlcNAc...) asparagine; by host) is linked at Asn158. Residues His269 and Asn289 contribute to the active site.

The protein belongs to the peptidase C1 family. Synthesized as an inactive proenzyme and activated by proteolytic removal of the inhibitory propeptide.

The catalysed reaction is Endopeptidase of broad specificity, hydrolyzing substrates of both cathepsin L and cathepsin B.. Cysteine protease that plays an essential role in host liquefaction to facilitate horizontal transmission of the virus. May participate in the degradation of foreign protein expressed by the baculovirus system. In Helicoverpa zea (Corn earworm moth), this protein is Viral cathepsin (VCATH).